The primary structure comprises 333 residues: Adenosine deaminase (333 aa).

Zn(2+)-binding residues include H12 and H14. Residues H14, D16, and G170 each coordinate substrate. Position 197 (H197) interacts with Zn(2+). The active-site Proton donor is E200. Residue D278 coordinates Zn(2+). D279 serves as a coordination point for substrate.

Belongs to the metallo-dependent hydrolases superfamily. Adenosine and AMP deaminases family. Adenosine deaminase subfamily. Requires Zn(2+) as cofactor.

It carries out the reaction adenosine + H2O + H(+) = inosine + NH4(+). It catalyses the reaction 2'-deoxyadenosine + H2O + H(+) = 2'-deoxyinosine + NH4(+). Catalyzes the hydrolytic deamination of adenosine and 2-deoxyadenosine. In Shigella sonnei (strain Ss046), this protein is Adenosine deaminase.